The chain runs to 906 residues: Eukaryotic translation initiation factor 4 gamma 2 (906 aa).

At methionine 1 the chain carries N-acetylmethionine. Residues 1 to 71 (MESAIAEGGA…SAANNSANEK (71 aa)) form a disordered region. A Phosphoserine modification is found at serine 11. The MIF4G domain occupies 78 to 308 (FRKVRGILNK…QDTVELREHH (231 aa)). At threonine 89 the chain carries Phosphothreonine. Residue arginine 359 is modified to Omega-N-methylarginine. Phosphoserine is present on serine 394. Lysine 430 carries the post-translational modification N6-methyllysine. The residue at position 442 (serine 442) is a Phosphoserine. The tract at residues 497-540 (PPSAQPPRTQTPPLGQTPQLGLKTNPPLIQEKPAKTSKKPPPSK) is disordered. The span at 502–515 (PPRTQTPPLGQTPQ) shows a compositional bias: polar residues. Residue arginine 504 is modified to Omega-N-methylarginine. Phosphothreonine occurs at positions 507 and 513. The region spanning 542 to 665 (ELLKLTEAVV…SISELAQPLE (124 aa)) is the MI domain. A Glycyl lysine isopeptide (Lys-Gly) (interchain with G-Cter in SUMO2) cross-link involves residue lysine 574. The region spanning 719–903 (EGKGLSFLFP…ETAEEEESEE (185 aa)) is the W2 domain. Phosphoserine is present on serine 901.

Belongs to the eukaryotic initiation factor 4G family. Interacts with the serine/threonine protein kinases MKNK1 and MKNK2. Binds EIF4A and EIF3. Interacts with MIF4GD. Interacts with DAZAP2. In terms of processing, phosphorylation; hyperphosphorylated during mitosis. In terms of tissue distribution, ubiquitously expressed in all tissues examined.

Functionally, appears to play a role in the switch from cap-dependent to IRES-mediated translation during mitosis, apoptosis and viral infection. Cleaved by some caspases and viral proteases. The protein is Eukaryotic translation initiation factor 4 gamma 2 of Mus musculus (Mouse).